The following is a 370-amino-acid chain: tRNA-specific 2-thiouridylase MnmA (370 aa).

Residues 14–21 and methionine 40 each bind ATP; that span reads GMSGGVDS. Residues 100–102 are interaction with target base in tRNA; it reads NPD. Cysteine 105 (nucleophile) is an active-site residue. Residues cysteine 105 and cysteine 205 are joined by a disulfide bond. An ATP-binding site is contributed by glycine 129. Residues 155–157 form an interaction with tRNA region; the sequence is KDQ. Cysteine 205 acts as the Cysteine persulfide intermediate in catalysis. An interaction with tRNA region spans residues 321–322; it reads RY.

The protein belongs to the MnmA/TRMU family.

Its subcellular location is the cytoplasm. The enzyme catalyses S-sulfanyl-L-cysteinyl-[protein] + uridine(34) in tRNA + AH2 + ATP = 2-thiouridine(34) in tRNA + L-cysteinyl-[protein] + A + AMP + diphosphate + H(+). Catalyzes the 2-thiolation of uridine at the wobble position (U34) of tRNA, leading to the formation of s(2)U34. The sequence is that of tRNA-specific 2-thiouridylase MnmA from Bordetella avium (strain 197N).